Consider the following 159-residue polypeptide: ATP synthase subunit b (159 aa).

A helical transmembrane segment spans residues 7–27; it reads VIFMTIINFCILVAILKHFFW.

Belongs to the ATPase B chain family. As to quaternary structure, F-type ATPases have 2 components, F(1) - the catalytic core - and F(0) - the membrane proton channel. F(1) has five subunits: alpha(3), beta(3), gamma(1), delta(1), epsilon(1). F(0) has three main subunits: a(1), b(2) and c(10-14). The alpha and beta chains form an alternating ring which encloses part of the gamma chain. F(1) is attached to F(0) by a central stalk formed by the gamma and epsilon chains, while a peripheral stalk is formed by the delta and b chains.

The protein localises to the cell membrane. Functionally, f(1)F(0) ATP synthase produces ATP from ADP in the presence of a proton or sodium gradient. F-type ATPases consist of two structural domains, F(1) containing the extramembraneous catalytic core and F(0) containing the membrane proton channel, linked together by a central stalk and a peripheral stalk. During catalysis, ATP synthesis in the catalytic domain of F(1) is coupled via a rotary mechanism of the central stalk subunits to proton translocation. Its function is as follows. Component of the F(0) channel, it forms part of the peripheral stalk, linking F(1) to F(0). The sequence is that of ATP synthase subunit b from Clostridium botulinum (strain Alaska E43 / Type E3).